The following is a 344-amino-acid chain: MLILLDTGIHEVAFFTKYENYTLCTVGRRENSKEEALLGYNLRFFTFGNSSYSYTVETVKRKCLAGVVTKGNINLVLYTGNGIQNVYEFSSNGELMLWQLLKTEKGYFLVGGVKRNNWDAFVAFLDRNFKVKWKKRLDFLEEYFYSVAEKGNKVYAVGRIKRGKNWDALVCIFSDNGKLLESYSIGSEGKDYFRFVKNLGGEVIAVGRSEDKFGDSDFLIYDFKNYYLYDSGEYDYARAVNSYGNSYVIAGETRFKGNNDGIFILLSKNFRPVRAFKIGWENTDAVRFMDNLFFTGYTYSLSFSADLILGVFSEDFEKVDVKKVNRVLKKEKVHLRDFLSSSCV.

This is an uncharacterized protein from Aquifex aeolicus (strain VF5).